The chain runs to 366 residues: MYFLVADHREHHVIPFLKTDFHHMHQNPIQKNQALLEIKQLFTGDYLICKSPSTILACIERKTYKDFAASLKDGRYKNRQKMLSLREQTNCQLYFFVEGPAFPNPQKKINHVAYASIITAMTHLMVRDHMFVIQTKNEAHSSQKLVQLFYAFSKEMVCVVPTSLTPTDEELCIKLWSSLSGISGVIGKILANTCSVAHLVSGKLPSQNIDQLKTPSNRPFPKKVKRMLISISKGNKELEIKLLSGVPNIGKKLAAEILKDHALLFFLNQPVECLANIQIAQKTRTIKLGMKRAEAIHYFLNWCGSAHVTVDSQNITEASRPTMQVATQPAATQPLHKVSDDASSDASSPTGHQTLSKEMSLNTVRC.

Residues 3–101 (FLVADHREHH…QLYFFVEGPA (99 aa)) form the ERCC4 domain. Composition is skewed to polar residues over residues 320 to 331 (RPTMQVATQPAA) and 349 to 366 (PTGHQTLSKEMSLNTVRC). Positions 320–366 (RPTMQVATQPAATQPLHKVSDDASSDASSPTGHQTLSKEMSLNTVRC) are disordered.

Belongs to the asfivirus EP364R family.

In terms of biological role, plays a role in the inhibition of type I interferon signaling pathway. Mechanistically, specifically interacts with 2',3'-cGAMP and cleaves it via its phosphodiesterase activity. In turn, prevents 2',3'-cGAMP interaction with host ER-resident STING1 leading to inhibition of downstream signaling pathway and type I interferon production. The polypeptide is ERCC4 domain-containing protein EP364R (Ornithodoros (relapsing fever ticks)).